Here is a 404-residue protein sequence, read N- to C-terminus: Cysteine desulfurase IscS (404 aa).

Pyridoxal 5'-phosphate is bound by residues Ala75–Thr76, Asn155, Gln183, and Ser203–His205. The residue at position 206 (Lys206) is an N6-(pyridoxal phosphate)lysine. Residue Thr243 coordinates pyridoxal 5'-phosphate. Cys328 serves as the catalytic Cysteine persulfide intermediate. Cys328 is a binding site for [2Fe-2S] cluster.

It belongs to the class-V pyridoxal-phosphate-dependent aminotransferase family. NifS/IscS subfamily. In terms of assembly, homodimer. Forms a heterotetramer with IscU, interacts with other sulfur acceptors. Pyridoxal 5'-phosphate is required as a cofactor.

It is found in the cytoplasm. The enzyme catalyses (sulfur carrier)-H + L-cysteine = (sulfur carrier)-SH + L-alanine. Its pathway is cofactor biosynthesis; iron-sulfur cluster biosynthesis. In terms of biological role, master enzyme that delivers sulfur to a number of partners involved in Fe-S cluster assembly, tRNA modification or cofactor biosynthesis. Catalyzes the removal of elemental sulfur and selenium atoms from cysteine and selenocysteine to produce alanine. Functions as a sulfur delivery protein for Fe-S cluster synthesis onto IscU, an Fe-S scaffold assembly protein, as well as other S acceptor proteins. Also functions as a selenium delivery protein in the pathway for the biosynthesis of selenophosphate. This Salmonella paratyphi C (strain RKS4594) protein is Cysteine desulfurase IscS.